The primary structure comprises 252 residues: Maintenance of carboxysome distribution protein A (252 aa).

Residues Gly11, Gly12, Gly14, Lys15, Thr16, Thr17, Gln41, Glu147, Lys151, Phe182, Arg183, Leu216, Glu217, and Ser218 each contribute to the ATP site. A Mg(2+)-binding site is contributed by Thr16.

Belongs to the ParA family. McdA subfamily. In terms of assembly, self-associates (probably a homodimer), interacts with McdB probably via the C-terminus of both proteins. Shows no signs of filament formation. Homodimerizes in the presence of ATP, making extra nucleotide contacts than with ADP or AMP-PNP. Each subunit binds 1 ATP molecule; Glu-147, Lys-151 and Arg-183 cross the dimer interface to contact ATP in the other subunit, while Phe-182, Arg-183 and Phe-221 stack with the adenine base in their own subunit.

The protein localises to the cytoplasm. It localises to the nucleoid. It catalyses the reaction ATP + H2O = ADP + phosphate + H(+). Its function is as follows. McdA and McdB together mediate carboxysome (Cb) spacing, size, ultrastructure and probably inheritance in the cell. Together they prevent Cb aggregation. McdA is an ATPase that forms dynamic gradients on the nucleoid in response to adapter protein McdB, which associates with carboxysomes. The interplay between McdA gradients on the nucleoid and McdB-bound carboxysomes result in the equal spacing of Cbs along the cell length. Binds nucleoid DNA in an ATP-dependent manner; neither ADP nor ATP-gamma-S support DNA binding. Upon ATP-binding dimerizes and binds nucleoid DNA; the (McdA-ATP)2 dimer transiently binds McdB-bound Cbs. McdA's ATPase activity is stimulated 2-fold by DNA and McdB; ATP hydrolysis causes McdA release from DNA. Overexpression leads to loss of McdA oscillation, diffuse nucleoid staining by McdA with formation of large carboxysome aggregates that are in regions depleted of McdA; McdA remains nucleoid-associated. Mutagenesis studies (characterized in vivo) suggest ATP binding, protein dimerization and a conformational change are necessary for nucleoid DNA-binding and binding to McdB-bound Cbs, which tethers Cbs to the nucleoid. Eventual McdB-stimulated ATP hydrolysis causes de-dimerization of McdA which no longer binds the nucleoid and releases McdB and Cbs. McdB-bound Cbs then move to a region of higher McdA concentration, distributing Cbs across the nucleoid. In terms of biological role, incorrect positioning (aggregation) of carboxysomes results in reduced CO(2) fixation by encapsulated ribulose-1,5-bisphosphate carboxylase (RuBisCO, cbbL/cbbS), which leads to slower growth, cell elongation, asymmetric cell division and an increase in RuBisCO levels. This chain is Maintenance of carboxysome distribution protein A, found in Synechococcus elongatus (strain ATCC 33912 / PCC 7942 / FACHB-805) (Anacystis nidulans R2).